Reading from the N-terminus, the 486-residue chain is Bile acid receptor (486 aa).

K132 is covalently cross-linked (Glycyl lysine isopeptide (Lys-Gly) (interchain with G-Cter in SUMO1)). The segment at residues 134–209 (DELCVVCGDR…MGMLAECMYT (76 aa)) is a DNA-binding region (nuclear receptor). Residues 137–157 (CVVCGDRASGYHYNALTCEGC) form an NR C4-type zinc finger. Residues S145 and S164 each carry the phosphoserine; by PKC/PRKCA modification. N6-acetyllysine; by EP300 is present on K167. An NR C4-type zinc finger spans residues 173–197 (CKNGGNCVMDMYMRRKCQECRLRKC). K220 carries the post-translational modification N6-methyllysine; by SETD7. Residue K227 is modified to N6-acetyllysine; by EP300. Residues 262-486 (DQQTLLHFIM…PLLCEIWDVQ (225 aa)) form the NR LBD domain. A Glycyl lysine isopeptide (Lys-Gly) (interchain with G-Cter in SUMO1) cross-link involves residue K289. The chenodeoxycholate site is built by R345, Y375, and Y383. T456 is subject to Phosphothreonine; by PKC/PRKCZ. H461 contacts chenodeoxycholate.

The protein belongs to the nuclear hormone receptor family. NR1 subfamily. In terms of assembly, heterodimer (via C-terminus) with RXRA (via DBD); the heterodimerization enhances the binding affinity for LXXLL motifs from coactivators. Binds DNA predominantly as a heterodimer with RXRA. After activation by agonist binding interacts with coactivators. Interacts with NCOA1, NCOA2, PPARGC1A, CARM1, SETD7, PRMT1, GPS2, SMARCA4 and MED1. Interacts with EP300 and SMARCD1. Interacts with XRCC5 and XRCC6; decreasing NR1H4/FXR transactivation activity towards ABCB11/BSEP. Interacts with PAGR1 and NCOA6; indicative for an association with an MLL2/MLL3 complex (ASCOM). Post-translationally, acetylated by EP300. Lys-227 as is the major acetylation site for EP300; the dynamicly regulated acetylation inhibits heterodimerization with RXRA and transactivation activity. Deacetylated by SIRT1. Methylation may increase transactivation of target genes. In terms of processing, phosphorylation by PKC/PRKCA increases transactivation activity by promoting association with PPARGC1A. Post-translationally, sumoylated upon ligand binding. In terms of tissue distribution, liver and hepatocyte-related cells express mainly FXRalpha1-type isoforms with isoform 3 and isoform 4 in approximately equal proportions. In intestine and kidney mainly FXRalpha2-type isoforms are expressed with isoform 1 and isoform 2 in approximately equal proportions. Expressed in pancreatic beta cells and macrophages.

The protein resides in the nucleus. Functionally, ligand-activated transcription factor. Receptor for bile acids (BAs) such as chenodeoxycholic acid (CDCA), lithocholic acid, deoxycholic acid (DCA) and allocholic acid (ACA). Plays a essential role in BA homeostasis through the regulation of genes involved in BA synthesis, conjugation and enterohepatic circulation. Also regulates lipid and glucose homeostasis and is involved innate immune response. The FXR-RXR heterodimer binds predominantly to farnesoid X receptor response elements (FXREs) containing two inverted repeats of the consensus sequence 5'-AGGTCA-3' in which the monomers are spaced by 1 nucleotide (IR-1) but also to tandem repeat DR1 sites with lower affinity, and can be activated by either FXR or RXR-specific ligands. It is proposed that monomeric nuclear receptors such as NR5A2/LRH-1 bound to coregulatory nuclear responsive element (NRE) halfsites located in close proximity to FXREs modulate transcriptional activity. In the liver activates transcription of the corepressor NR0B2 thereby indirectly inhibiting CYP7A1 and CYP8B1 (involved in BA synthesis) implicating at least in part histone demethylase KDM1A resulting in epigenomic repression, and SLC10A1/NTCP (involved in hepatic uptake of conjugated BAs). Activates transcription of the repressor MAFG (involved in regulation of BA synthesis). Activates transcription of SLC27A5/BACS and BAAT (involved in BA conjugation), ABCB11/BSEP (involved in bile salt export) by directly recruiting histone methyltransferase CARM1, and ABCC2/MRP2 (involved in secretion of conjugated BAs) and ABCB4 (involved in secretion of phosphatidylcholine in the small intestine). Activates transcription of SLC27A5/BACS and BAAT (involved in BA conjugation), ABCB11/BSEP (involved in bile salt export) by directly recruiting histone methyltransferase CARM1, and ABCC2/MRP2 (involved in secretion of conjugated BAs) and ABCB4 (involved in secretion of phosphatidylcholine in the small intestine). In the intestine activates FGF19 expression and secretion leading to hepatic CYP7A1 repression. The function also involves the coordinated induction of hepatic KLB/beta-klotho expression. Regulates transcription of liver UGT2B4 and SULT2A1 involved in BA detoxification; binding to the UGT2B4 promoter seems to imply a monomeric transactivation independent of RXRA. Modulates lipid homeostasis by activating liver NR0B2/SHP-mediated repression of SREBF1 (involved in de novo lipogenesis), expression of PLTP (involved in HDL formation), SCARB1 (involved in HDL hepatic uptake), APOE, APOC1, APOC4, PPARA (involved in beta-oxidation of fatty acids), VLDLR and SDC1 (involved in the hepatic uptake of LDL and IDL remnants), and inhibiting expression of MTTP (involved in VLDL assembly. Increases expression of APOC2 (promoting lipoprotein lipase activity implicated in triglyceride clearance). Transrepresses APOA1 involving a monomeric competition with NR2A1 for binding to a DR1 element. Also reduces triglyceride clearance by inhibiting expression of ANGPTL3 and APOC3 (both involved in inhibition of lipoprotein lipase). Involved in glucose homeostasis by modulating hepatic gluconeogenesis through activation of NR0B2/SHP-mediated repression of respective genes. Modulates glycogen synthesis (inducing phosphorylation of glycogen synthase kinase-3). Modulates glucose-stimulated insulin secretion and is involved in insulin resistance. Involved in intestinal innate immunity. Plays a role in protecting the distal small intestine against bacterial overgrowth and preservation of the epithelial barrier. Down-regulates inflammatory cytokine expression in several types of immune cells including macrophages and mononuclear cells. Mediates trans-repression of TLR4-induced cytokine expression; the function seems to require its sumoylation and prevents N-CoR nuclear receptor corepressor clearance from target genes such as IL1B and NOS2. Involved in the TLR9-mediated protective mechanism in intestinal inflammation. Plays an anti-inflammatory role in liver inflammation; proposed to inhibit pro-inflammatory (but not antiapoptotic) NF-kappa-B signaling). Promotes transcriptional activation of target genes NR0B2/SHP (inducible by unconjugated CDCA), SLC51B/OSTB (inducible by unconjugated CDCA and DCA) and FABP6/IBAP; low activity for ABCB11/BSEP (inducible by unconjugated CDCA, DCA and ACA); not inducible by taurine- and glycine-amidated CDCA. In terms of biological role, promotes transcriptional activation of target genes ABCB11/BSEP (inducible by unconjugated CDCA, DCA and ACA), NR0B2/SHP (inducible by unconjugated CDCA DCA and ACA), SLC51B/OSTB (inducible by unconjugated CDCA and DCA) and FABP6/IBAP; not inducible by taurine- and glycine-amidated CDCA. Its function is as follows. Promotes transcriptional activation of target genes NR0B2/SHP (inducible by unconjugated CDCA), SLC51B/OSTB (inducible by unconjugated CDCA and DCA) and IBAP; low activity for ABCB11/BSEP (inducible by unconjugated CDCA, DCA and ACA); not inducible by taurine- and glycine-amidated CDCA. Functionally, promotes transcriptional activation of target genes ABCB11/BSEP (inducible by unconjugated CDCA, ACA and DCA), NR0B2/SHP (inducible by unconjugated CDCA, ACA and DCA), SLC51B/OSTB (inducible by unconjugated CDCA and DCA) and FABP6/IBAP; most efficient isoform compared to isoforms 1 to 3; not inducible by taurine- and glycine-amidated CDCA. This is Bile acid receptor (NR1H4) from Homo sapiens (Human).